The primary structure comprises 191 residues: Prostaglandin-H2 D-isomerase (191 aa).

Positions 1 to 24 (MAALHTLWMGLVLLGVLGVLQTRA) are cleaved as a signal peptide. Gln25 bears the Pyrrolidone carboxylic acid mark. N-linked (GlcNAc...) asparagine glycosylation occurs at Asn51. Cys65 functions as the Nucleophile in the catalytic mechanism. The N-linked (GlcNAc...) asparagine glycan is linked to Asn78. A disulfide bridge links Cys89 with Cys186.

The protein belongs to the calycin superfamily. Lipocalin family. As to quaternary structure, monomer. In terms of processing, N- and O-glycosylated. Both N-glycosylation recognition sites are almost quantitatively occupied by N-glycans of the biantennary complex type, with a considerable proportion of structures bearing a bisecting GlcNAc. N-glycan at Asn-78: dHex1Hex5HexNAc4. Agalacto structure as well as sialylated and nonsialylated oligosaccharides bearing alpha2-3- and/or alpha2-6-linked NeuNAc are present.

It is found in the rough endoplasmic reticulum. Its subcellular location is the nucleus membrane. The protein resides in the golgi apparatus. The protein localises to the cytoplasm. It localises to the perinuclear region. It is found in the secreted. It catalyses the reaction prostaglandin H2 = prostaglandin D2. Functionally, catalyzes the conversion of PGH2 to PGD2, a prostaglandin involved in smooth muscle contraction/relaxation and a potent inhibitor of platelet aggregation. Involved in a variety of CNS functions, such as sedation, NREM sleep and PGE2-induced allodynia, and may have an anti-apoptotic role in oligodendrocytes. Binds small non-substrate lipophilic molecules, including biliverdin, bilirubin, retinal, retinoic acid and thyroid hormone, and may act as a scavenger for harmful hydrophobic molecules and as a secretory retinoid and thyroid hormone transporter. Possibly involved in development and maintenance of the blood-brain, blood-retina, blood-aqueous humor and blood-testis barrier. It is likely to play important roles in both maturation and maintenance of the central nervous system and male reproductive system. Involved in PLA2G3-dependent maturation of mast cells. PLA2G3 is secreted by immature mast cells and acts on nearby fibroblasts upstream to PTDGS to synthesize PGD2, which in turn promotes mast cell maturation and degranulation via PTGDR. The chain is Prostaglandin-H2 D-isomerase (PTGDS) from Felis catus (Cat).